Here is a 526-residue protein sequence, read N- to C-terminus: Glucose-6-phosphate isomerase (526 aa).

The Proton donor role is filled by Glu-320. Residues His-349 and Lys-453 contribute to the active site.

The protein belongs to the GPI family.

The protein localises to the cytoplasm. The enzyme catalyses alpha-D-glucose 6-phosphate = beta-D-fructose 6-phosphate. It participates in carbohydrate biosynthesis; gluconeogenesis. Its pathway is carbohydrate degradation; glycolysis; D-glyceraldehyde 3-phosphate and glycerone phosphate from D-glucose: step 2/4. Functionally, catalyzes the reversible isomerization of glucose-6-phosphate to fructose-6-phosphate. The sequence is that of Glucose-6-phosphate isomerase from Rippkaea orientalis (strain PCC 8801 / RF-1) (Cyanothece sp. (strain PCC 8801)).